The sequence spans 105 residues: Heat shock protein HspQ (105 aa).

This sequence belongs to the HspQ family.

It localises to the cytoplasm. Functionally, involved in the degradation of certain denaturated proteins, including DnaA, during heat shock stress. The chain is Heat shock protein HspQ from Baumannia cicadellinicola subsp. Homalodisca coagulata.